Consider the following 137-residue polypeptide: MSGSGASGNKFRMSLALPVGAVMNCADNSGARNLYVLAVKGTGARLNRLPAAAAGDMVMATVKKGKPELRKKVMPAIVIRQSKPWRRRDGVYLYFEDNAGVIVNPKGEMKGSAITGPVAKECADLWPRIASNSGVVV.

Belongs to the universal ribosomal protein uL14 family. Component of the large ribosomal subunit. Mature ribosomes consist of a small (40S) and a large (60S) subunit. The 40S subunit contains about 32 different proteins and 1 molecule of RNA (18S). The 60S subunit contains 45 different proteins and 3 molecules of RNA (25S, 5.8S and 5S).

The protein localises to the cytoplasm. Component of the ribosome, a large ribonucleoprotein complex responsible for the synthesis of proteins in the cell. The small ribosomal subunit (SSU) binds messenger RNAs (mRNAs) and translates the encoded message by selecting cognate aminoacyl-transfer RNA (tRNA) molecules. The large subunit (LSU) contains the ribosomal catalytic site termed the peptidyl transferase center (PTC), which catalyzes the formation of peptide bonds, thereby polymerizing the amino acids delivered by tRNAs into a polypeptide chain. The nascent polypeptides leave the ribosome through a tunnel in the LSU and interact with protein factors that function in enzymatic processing, targeting, and the membrane insertion of nascent chains at the exit of the ribosomal tunnel. The chain is Large ribosomal subunit protein uL14 from Candida albicans (strain SC5314 / ATCC MYA-2876) (Yeast).